The sequence spans 378 residues: Mannitol-1-phosphate 5-dehydrogenase (378 aa).

4-15 (SVHFGAGNIGRG) serves as a coordination point for NAD(+).

The protein belongs to the mannitol dehydrogenase family.

It carries out the reaction D-mannitol 1-phosphate + NAD(+) = beta-D-fructose 6-phosphate + NADH + H(+). The polypeptide is Mannitol-1-phosphate 5-dehydrogenase (Streptococcus pneumoniae (strain 70585)).